A 90-amino-acid chain; its full sequence is Auxin-responsive protein SAUR22 (90 aa).

This sequence belongs to the ARG7 family.

The protein resides in the cell membrane. Its function is as follows. Functions as a positive effector of cell expansion through modulation of auxin transport. This is Auxin-responsive protein SAUR22 from Arabidopsis thaliana (Mouse-ear cress).